A 398-amino-acid chain; its full sequence is Subtilisin-like protease CPC735_015300 (398 aa).

The first 19 residues, 1 to 19, serve as a signal peptide directing secretion; it reads MGFIKTLSLSLAAASAANA. Positions 20 to 116 are excised as a propeptide; it reads AKILSPSRPD…IEHDHVVRLT (97 aa). Positions 35–115 constitute an Inhibitor I9 domain; the sequence is QYIVVMKDGV…FIEHDHVVRL (81 aa). One can recognise a Peptidase S8 domain in the interval 126-398; it reads TWGLGRVSHQ…NKLTYNGNGQ (273 aa). Catalysis depends on charge relay system residues Asp158 and His189. Asn250 carries N-linked (GlcNAc...) asparagine glycosylation. Ser344 (charge relay system) is an active-site residue. The N-linked (GlcNAc...) asparagine glycan is linked to Asn362.

It belongs to the peptidase S8 family.

The protein resides in the secreted. Secreted subtilisin-like serine protease with keratinolytic activity that contributes to pathogenicity. This chain is Subtilisin-like protease CPC735_015300, found in Coccidioides posadasii (strain C735) (Valley fever fungus).